The chain runs to 144 residues: Large ribosomal subunit protein uL15 (144 aa).

Positions 1–51 are disordered; the sequence is MRLNTLSPAEGAKHSAKRLGRGIGSGLGKTGGRGHKGQKSRTGGKVRRGFE. Over residues 21–31 the composition is skewed to gly residues; sequence RGIGSGLGKTG. Residues 32 to 47 show a composition bias toward basic residues; it reads GRGHKGQKSRTGGKVR.

This sequence belongs to the universal ribosomal protein uL15 family. Part of the 50S ribosomal subunit.

Binds to the 23S rRNA. The polypeptide is Large ribosomal subunit protein uL15 (Actinobacillus succinogenes (strain ATCC 55618 / DSM 22257 / CCUG 43843 / 130Z)).